Here is a 359-residue protein sequence, read N- to C-terminus: DNA-directed RNA polymerase RPB3-11 homolog (359 aa).

It in the N-terminal section; belongs to the archaeal RpoD/eukaryotic RPB3 RNA polymerase subunit family. This sequence in the C-terminal section; belongs to the archaeal RpoL/eukaryotic RPB11/RPC19 RNA polymerase subunit family. As to quaternary structure, part of the viral DNA-directed RNA polymerase that consists of 8 polII-like subunits (RPB1, RPB2, RPB3, RPB5, RPB6, RPB7, RPB9, RPB10), a capping enzyme and a termination factor.

Its subcellular location is the host cytoplasm. It localises to the virion. Component of the DNA-directed RNA polymerase (RNAP) that catalyzes the transcription in the cytoplasm of viral DNA into RNA using the four ribonucleoside triphosphates as substrates. This Ornithodoros (relapsing fever ticks) protein is DNA-directed RNA polymerase RPB3-11 homolog.